Here is a 189-residue protein sequence, read N- to C-terminus: dCTP deaminase (189 aa).

Residues 112 to 117, 136 to 138, glutamine 157, tyrosine 171, and glutamine 181 contribute to the dCTP site; these read KSTYAR and TLE. The active-site Proton donor/acceptor is glutamate 138.

The protein belongs to the dCTP deaminase family. In terms of assembly, homotrimer.

The enzyme catalyses dCTP + H2O + H(+) = dUTP + NH4(+). Its pathway is pyrimidine metabolism; dUMP biosynthesis; dUMP from dCTP (dUTP route): step 1/2. Its function is as follows. Catalyzes the deamination of dCTP to dUTP. The protein is dCTP deaminase of Methylacidiphilum infernorum (isolate V4) (Methylokorus infernorum (strain V4)).